A 203-amino-acid polypeptide reads, in one-letter code: Proteasome subunit beta 1 (203 aa).

A propeptide spans 1–7 (MAEKLKG) (removed in mature form; by autocatalysis). The Nucleophile role is filled by Thr-8.

It belongs to the peptidase T1B family. In terms of assembly, the 20S proteasome core is composed of 14 alpha and 14 beta subunits that assemble into four stacked heptameric rings, resulting in a barrel-shaped structure. The two inner rings, each composed of seven catalytic beta subunits, are sandwiched by two outer rings, each composed of seven alpha subunits. The catalytic chamber with the active sites is on the inside of the barrel. Has a gated structure, the ends of the cylinder being occluded by the N-termini of the alpha-subunits. Is capped at one or both ends by the proteasome regulatory ATPase, PAN.

The protein resides in the cytoplasm. The catalysed reaction is Cleavage of peptide bonds with very broad specificity.. The formation of the proteasomal ATPase PAN-20S proteasome complex, via the docking of the C-termini of PAN into the intersubunit pockets in the alpha-rings, triggers opening of the gate for substrate entry. Interconversion between the open-gate and close-gate conformations leads to a dynamic regulation of the 20S proteasome proteolysis activity. Functionally, component of the proteasome core, a large protease complex with broad specificity involved in protein degradation. The polypeptide is Proteasome subunit beta 1 (Thermococcus onnurineus (strain NA1)).